We begin with the raw amino-acid sequence, 88 residues long: UPF0297 protein LAR_0520 (88 aa).

The protein belongs to the UPF0297 family.

This Limosilactobacillus reuteri subsp. reuteri (strain JCM 1112) (Lactobacillus reuteri) protein is UPF0297 protein LAR_0520.